Here is a 485-residue protein sequence, read N- to C-terminus: Glutamyl-tRNA(Gln) amidotransferase subunit A (485 aa).

Catalysis depends on charge relay system residues K78 and S153. S177 serves as the catalytic Acyl-ester intermediate.

Belongs to the amidase family. GatA subfamily. As to quaternary structure, heterotrimer of A, B and C subunits.

It carries out the reaction L-glutamyl-tRNA(Gln) + L-glutamine + ATP + H2O = L-glutaminyl-tRNA(Gln) + L-glutamate + ADP + phosphate + H(+). In terms of biological role, allows the formation of correctly charged Gln-tRNA(Gln) through the transamidation of misacylated Glu-tRNA(Gln) in organisms which lack glutaminyl-tRNA synthetase. The reaction takes place in the presence of glutamine and ATP through an activated gamma-phospho-Glu-tRNA(Gln). This Syntrophus aciditrophicus (strain SB) protein is Glutamyl-tRNA(Gln) amidotransferase subunit A.